The primary structure comprises 319 residues: Acetyl-coenzyme A carboxylase carboxyl transferase subunit alpha (319 aa).

The CoA carboxyltransferase C-terminal domain maps to 32–293 (NVDIEVRALE…KAVLLNELEA (262 aa)).

The protein belongs to the AccA family. In terms of assembly, acetyl-CoA carboxylase is a heterohexamer composed of biotin carboxyl carrier protein (AccB), biotin carboxylase (AccC) and two subunits each of ACCase subunit alpha (AccA) and ACCase subunit beta (AccD).

It is found in the cytoplasm. It catalyses the reaction N(6)-carboxybiotinyl-L-lysyl-[protein] + acetyl-CoA = N(6)-biotinyl-L-lysyl-[protein] + malonyl-CoA. Its pathway is lipid metabolism; malonyl-CoA biosynthesis; malonyl-CoA from acetyl-CoA: step 1/1. Component of the acetyl coenzyme A carboxylase (ACC) complex. First, biotin carboxylase catalyzes the carboxylation of biotin on its carrier protein (BCCP) and then the CO(2) group is transferred by the carboxyltransferase to acetyl-CoA to form malonyl-CoA. This Xylella fastidiosa (strain Temecula1 / ATCC 700964) protein is Acetyl-coenzyme A carboxylase carboxyl transferase subunit alpha.